Here is a 268-residue protein sequence, read N- to C-terminus: Undecaprenyl-diphosphatase (268 aa).

The next 8 membrane-spanning stretches (helical) occupy residues 11–33 (FLGL…LLLI), 46–66 (FEVL…SAKL), 84–104 (LGVL…HGFI), 107–127 (VLFE…FILL), 144–164 (YPLP…IPGV), 185–205 (AEFS…YDLF), 213–233 (FNDG…GVFV), and 246–266 (FALF…ALII).

It belongs to the UppP family.

Its subcellular location is the cell inner membrane. The enzyme catalyses di-trans,octa-cis-undecaprenyl diphosphate + H2O = di-trans,octa-cis-undecaprenyl phosphate + phosphate + H(+). Catalyzes the dephosphorylation of undecaprenyl diphosphate (UPP). Confers resistance to bacitracin. This Brucella suis (strain ATCC 23445 / NCTC 10510) protein is Undecaprenyl-diphosphatase.